Consider the following 261-residue polypeptide: Kallikrein 1-related peptidase b21 (261 aa).

Residues 1 to 17 (MRFLILFLALSLGEIDA) form the signal peptide. Positions 18–24 (APPVQSR) are cleaved as a propeptide — activation peptide. The 234-residue stretch at 25 to 258 (IVGGFNCEKN…FTSWIKDTMA (234 aa)) folds into the Peptidase S1 domain. Disulfide bonds link C31–C173, C50–C66, C152–C219, C184–C198, and C209–C234. The Charge relay system role is filled by H65. The N-linked (GlcNAc...) asparagine glycan is linked to N102. The active-site Charge relay system is the D120. The Charge relay system role is filled by S213.

This sequence belongs to the peptidase S1 family. Kallikrein subfamily. Expressed in testis and submaxillary gland. In the testis, expression localized specifically to Leydig cells in the interstitial tissues.

The catalysed reaction is Preferential cleavage of Arg-|-Xaa bonds in small molecule substrates. Highly selective action to release kallidin (lysyl-bradykinin) from kininogen involves hydrolysis of Met-|-Xaa or Leu-|-Xaa.. With respect to regulation, inhibited by protease inhibitors diisopropylfluorophosphate, leupeptin, antipain, benzamidine, phenylmethylsulfonyl fluoride and soybean trypsin inhibitor. Functionally, glandular kallikreins cleave Met-Lys and Arg-Ser bonds in kininogen to release Lys-bradykinin. Displays trypsin-like substrate specificity and shows activity towards casein, gelatin, fibronectin and IGFBP3. The chain is Kallikrein 1-related peptidase b21 (Klk1b21) from Mus musculus (Mouse).